The chain runs to 738 residues: Eukaryotic translation initiation factor 3 subunit B (738 aa).

Positions 1–10 (MAPSFENLSE) are enriched in polar residues. The interval 1 to 20 (MAPSFENLSEQDLHEEEEEE) is disordered. An RRM domain is found at 40-126 (TFVVIDGLPV…HTLLVNKLMD (87 aa)). WD repeat units follow at residues 193–230 (AHWTQLFVQWSPKGTYLASVHPQGVQLWGGPTFSKQKQ), 232–289 (PHPF…RSFV), 301–342 (QPKK…LLGK), 454–494 (SLKD…SFFA), 511–554 (IEKK…EKND), and 569–607 (VDHYGVTDIEWDPTGRYVVSGASAWTHQMENGFNLHTFS). A disordered region spans residues 693–720 (EAYGLPEEADQPKAAKDAPTNTEDKGET). The segment covering 702-720 (DQPKAAKDAPTNTEDKGET) has biased composition (basic and acidic residues).

Belongs to the eIF-3 subunit B family. As to quaternary structure, component of the eukaryotic translation initiation factor 3 (eIF-3) complex.

It is found in the cytoplasm. Its function is as follows. RNA-binding component of the eukaryotic translation initiation factor 3 (eIF-3) complex, which is involved in protein synthesis of a specialized repertoire of mRNAs and, together with other initiation factors, stimulates binding of mRNA and methionyl-tRNAi to the 40S ribosome. The eIF-3 complex specifically targets and initiates translation of a subset of mRNAs involved in cell proliferation. The polypeptide is Eukaryotic translation initiation factor 3 subunit B (prt1) (Emericella nidulans (strain FGSC A4 / ATCC 38163 / CBS 112.46 / NRRL 194 / M139) (Aspergillus nidulans)).